We begin with the raw amino-acid sequence, 472 residues long: Siroheme synthase 1 (472 aa).

A precorrin-2 dehydrogenase /sirohydrochlorin ferrochelatase region spans residues 1 to 203; it reads MDYLPLFADL…GQLTEAENEL (203 aa). Residues 22–23 and 43–44 each bind NAD(+); these read EV and QT. The residue at position 128 (S128) is a Phosphoserine. A uroporphyrinogen-III C-methyltransferase region spans residues 215–472; sequence GEVALVGAGP…AISPSVVNLA (258 aa). P224 is an S-adenosyl-L-methionine binding site. D247 serves as the catalytic Proton acceptor. Residue K269 is the Proton donor of the active site. S-adenosyl-L-methionine contacts are provided by residues 300–302, I305, 330–331, M382, and G411; these read GGD and TA.

In the N-terminal section; belongs to the precorrin-2 dehydrogenase / sirohydrochlorin ferrochelatase family. It in the C-terminal section; belongs to the precorrin methyltransferase family.

The enzyme catalyses uroporphyrinogen III + 2 S-adenosyl-L-methionine = precorrin-2 + 2 S-adenosyl-L-homocysteine + H(+). It carries out the reaction precorrin-2 + NAD(+) = sirohydrochlorin + NADH + 2 H(+). The catalysed reaction is siroheme + 2 H(+) = sirohydrochlorin + Fe(2+). Its pathway is cofactor biosynthesis; adenosylcobalamin biosynthesis; precorrin-2 from uroporphyrinogen III: step 1/1. The protein operates within cofactor biosynthesis; adenosylcobalamin biosynthesis; sirohydrochlorin from precorrin-2: step 1/1. It participates in porphyrin-containing compound metabolism; siroheme biosynthesis; precorrin-2 from uroporphyrinogen III: step 1/1. It functions in the pathway porphyrin-containing compound metabolism; siroheme biosynthesis; siroheme from sirohydrochlorin: step 1/1. Its pathway is porphyrin-containing compound metabolism; siroheme biosynthesis; sirohydrochlorin from precorrin-2: step 1/1. Multifunctional enzyme that catalyzes the SAM-dependent methylations of uroporphyrinogen III at position C-2 and C-7 to form precorrin-2 via precorrin-1. Then it catalyzes the NAD-dependent ring dehydrogenation of precorrin-2 to yield sirohydrochlorin. Finally, it catalyzes the ferrochelation of sirohydrochlorin to yield siroheme. This Yersinia pestis bv. Antiqua (strain Nepal516) protein is Siroheme synthase 1.